A 205-amino-acid polypeptide reads, in one-letter code: Putative STAG3-like protein 1 (205 aa).

An SCD domain is found at P10–M95.

It belongs to the SCC3 family.

Its subcellular location is the nucleus. The polypeptide is Putative STAG3-like protein 1 (STAG3L1) (Homo sapiens (Human)).